A 300-amino-acid polypeptide reads, in one-letter code: GTPase Era (300 aa).

The 168-residue stretch at Lys-6–Glu-173 folds into the Era-type G domain. The interval Gly-14–Ser-21 is G1. Gly-14–Ser-21 contributes to the GTP binding site. Residues Gln-40–Asn-44 are G2. Positions Asp-61–Gly-64 are G3. Residues Asp-61–Ile-65 and Asn-123–Asp-126 contribute to the GTP site. The tract at residues Asn-123–Asp-126 is G4. Residues Ile-152–Ala-154 are G5. Residues Thr-204–Lys-281 enclose the KH type-2 domain.

The protein belongs to the TRAFAC class TrmE-Era-EngA-EngB-Septin-like GTPase superfamily. Era GTPase family. In terms of assembly, monomer.

Its subcellular location is the cytoplasm. The protein localises to the cell membrane. An essential GTPase that binds both GDP and GTP, with rapid nucleotide exchange. Plays a role in 16S rRNA processing and 30S ribosomal subunit biogenesis and possibly also in cell cycle regulation and energy metabolism. In Enterococcus faecalis (strain ATCC 700802 / V583), this protein is GTPase Era.